A 79-amino-acid chain; its full sequence is Translational regulator CsrA (79 aa).

This sequence belongs to the CsrA/RsmA family. In terms of assembly, homodimer; the beta-strands of each monomer intercalate to form a hydrophobic core, while the alpha-helices form wings that extend away from the core.

The protein resides in the cytoplasm. A translational regulator that binds mRNA to regulate translation initiation and/or mRNA stability. Usually binds in the 5'-UTR at or near the Shine-Dalgarno sequence preventing ribosome-binding, thus repressing translation. Its main target seems to be the major flagellin gene, while its function is anatagonized by FliW. The polypeptide is Translational regulator CsrA (Geotalea uraniireducens (strain Rf4) (Geobacter uraniireducens)).